The chain runs to 173 residues: Mesencephalic astrocyte-derived neurotrophic factor homolog (173 aa).

The signal sequence occupies residues 1 to 22; it reads MKTWYMVVVIGFLATLAQTSLA. 4 disulfide bridges follow: Cys28–Cys114, Cys31–Cys103, Cys61–Cys72, and Cys148–Cys151.

It belongs to the ARMET family.

The protein resides in the secreted. Its function is as follows. Required during the maturation of the embryonic nervous system for maintenance of neuronal and cuticular connectivity. Essential for maintenance of dopaminergic neurons and dopamine levels. In Drosophila erecta (Fruit fly), this protein is Mesencephalic astrocyte-derived neurotrophic factor homolog.